Consider the following 179-residue polypeptide: Transcriptional repressor NrdR (179 aa).

The segment at 3–34 is a zinc-finger region; that stretch reads CPYCQHTNSRVLESRSSEGGQSIRRRRECLCC. Residues 49 to 139 enclose the ATP-cone domain; that stretch reads ITVIKHDGKK…VYGRFQGIKD (91 aa). The disordered stretch occupies residues 160 to 179; it reads KPANDDFSEQETPSTVMMPS. Residues 169-179 are compositionally biased toward polar residues; it reads QETPSTVMMPS.

It belongs to the NrdR family. It depends on Zn(2+) as a cofactor.

Its function is as follows. Negatively regulates transcription of bacterial ribonucleotide reductase nrd genes and operons by binding to NrdR-boxes. The protein is Transcriptional repressor NrdR of Rippkaea orientalis (strain PCC 8801 / RF-1) (Cyanothece sp. (strain PCC 8801)).